Reading from the N-terminus, the 264-residue chain is Putative HTH-type transcriptional regulator TrmBL2 (264 aa).

Positions 33-54 form a DNA-binding region, H-T-H motif; that stretch reads LTPAELASVSEVPAPRTYDVLR.

This sequence belongs to the transcriptional regulator TrmB family.

Binds to the maltodextrin transport gene cluster (mdxE operon) promoter and to some other TGM (Thermococcales-Glycolytic-Motif) sequences, but not exclusively. The chain is Putative HTH-type transcriptional regulator TrmBL2 (trmBL2) from Pyrococcus furiosus (strain ATCC 43587 / DSM 3638 / JCM 8422 / Vc1).